Here is a 204-residue protein sequence, read N- to C-terminus: Lymphotoxin-alpha (204 aa).

The signal sequence occupies residues 1–33 (MTPPGRLYLLRVCSTPPLLLLGLLLALPLEAQG). The 143-residue stretch at 62–204 (PAAHLVGDPS…SSVFFGAFAL (143 aa)) folds into the THD domain. Residue N95 is glycosylated (N-linked (GlcNAc...) asparagine). C119 and C155 form a disulfide bridge.

It belongs to the tumor necrosis factor family. As to quaternary structure, homotrimer, and heterotrimer of either two LTB and one LTA subunits or (less prevalent) two LTA and one LTB subunits. Interacts with TNFRSF14.

It is found in the secreted. Its subcellular location is the membrane. Cytokine that in its homotrimeric form binds to TNFRSF1A/TNFR1, TNFRSF1B/TNFBR and TNFRSF14/HVEM. In its heterotrimeric form with LTB binds to TNFRSF3/LTBR. Lymphotoxin is produced by lymphocytes and is cytotoxic for a wide range of tumor cells in vitro and in vivo. This is Lymphotoxin-alpha (LTA) from Bos taurus (Bovine).